The chain runs to 259 residues: UPF0246 protein Rfer_2372 (259 aa).

Belongs to the UPF0246 family.

The sequence is that of UPF0246 protein Rfer_2372 from Albidiferax ferrireducens (strain ATCC BAA-621 / DSM 15236 / T118) (Rhodoferax ferrireducens).